The sequence spans 712 residues: Golgin candidate 3 (712 aa).

The interval 23 to 49 is disordered; that stretch reads DEEEDDLHKYGSANGVSNSDRRNSSGF. The span at 36-49 shows a compositional bias: polar residues; it reads NGVSNSDRRNSSGF. A coiled-coil region spans residues 65 to 134; it reads AHHEIERYKA…LKEARTDISR (70 aa). The span at 135 to 150 shows a compositional bias: polar residues; that stretch reads GSNNYAIKGNNDQSPN. Disordered stretches follow at residues 135–176 and 306–347; these read GSNN…TDSF and ESRK…MEQS. 3 coiled-coil regions span residues 197 to 313, 340 to 558, and 659 to 690; these read QATE…LTNS, GKEE…LNRM, and LKDA…QEAA. The span at 328 to 344 shows a compositional bias: basic and acidic residues; the sequence is STLDKEKPESFPGKEEM. In terms of domain architecture, GRIP spans 557–608; that stretch reads RMSMESDYLVDRRIVIKLLVTYFQKNHNKEVLDLMVRMLGFSEEDKERIGAA. The interval 666 to 712 is disordered; it reads ERREAEEAAASKAKQDSERTRQEAALHDSEFSTVPLRSSESNQRLSR. Basic and acidic residues predominate over residues 678 to 695; it reads AKQDSERTRQEAALHDSE. Over residues 696-712 the composition is skewed to polar residues; that stretch reads FSTVPLRSSESNQRLSR.

Interacts with ARF1; preferentially with the active form of the protein.

The protein localises to the golgi apparatus. It is found in the endosome. In terms of biological role, golgi matrix protein playing a role in tethering of vesicles to Golgi membranes and in maintaining the overall structure of the Golgi apparatus. In Arabidopsis thaliana (Mouse-ear cress), this protein is Golgin candidate 3 (GC3).